Reading from the N-terminus, the 142-residue chain is Large ribosomal subunit protein uL13 (142 aa).

This sequence belongs to the universal ribosomal protein uL13 family. Part of the 50S ribosomal subunit.

Functionally, this protein is one of the early assembly proteins of the 50S ribosomal subunit, although it is not seen to bind rRNA by itself. It is important during the early stages of 50S assembly. The chain is Large ribosomal subunit protein uL13 from Hahella chejuensis (strain KCTC 2396).